The sequence spans 379 residues: S-(hydroxymethyl)glutathione dehydrogenase (379 aa).

Position 47 (Cys47) interacts with Zn(2+). His48 is an NAD(+) binding site. Zn(2+) contacts are provided by His69, Glu70, Cys99, Cys102, Cys105, Cys113, and Cys176. NAD(+)-binding positions include 201–206 (GAGCIG), Asp225, and 296–298 (IGV).

It belongs to the zinc-containing alcohol dehydrogenase family. Class-III subfamily. The cofactor is Zn(2+).

It catalyses the reaction a primary alcohol + NAD(+) = an aldehyde + NADH + H(+). It carries out the reaction a secondary alcohol + NAD(+) = a ketone + NADH + H(+). The enzyme catalyses S-(hydroxymethyl)glutathione + NADP(+) = S-formylglutathione + NADPH + H(+). The catalysed reaction is S-(hydroxymethyl)glutathione + NAD(+) = S-formylglutathione + NADH + H(+). It catalyses the reaction S-nitrosoglutathione + NADH + H(+) = S-(hydroxysulfenamide)glutathione + NAD(+). Its function is as follows. Oxidizes long-chain alcohols and, in the presence of glutathione, is able to oxidize formaldehyde. Also acts as a S-nitroso-glutathione reductase by catalyzing the NADH-dependent reduction of S-nitrosoglutathione, thereby regulating protein S-nitrosylation. The chain is S-(hydroxymethyl)glutathione dehydrogenase (FLD1) from Komagataella pastoris (Yeast).